The chain runs to 590 residues: Ras-specific guanine nucleotide-releasing factor RalGPS2 (590 aa).

Positions 49 to 287 (TPEEYAGQIT…YKLSLKIEPG (239 aa)) constitute a Ras-GEF domain. The segment at 288-319 (ASTPRSAASREDLAGPDIGASPQGGRKSSAAA) is disordered. Residues Ser-293, Ser-296, and Ser-308 each carry the phosphoserine modification. A PXXP motif is present at residues 331–334 (PQTP). Thr-333 is modified (phosphothreonine). 2 positions are modified to phosphoserine: Ser-336 and Ser-350. A Phosphothreonine modification is found at Thr-368. Residues 380 to 413 (DSVMEPHAPSRGQAESSTLSSGISIGSSDGSELS) are disordered. Ser-381 bears the Phosphoserine mark. The segment covering 394 to 410 (ESSTLSSGISIGSSDGS) has biased composition (low complexity). A Phosphoserine modification is found at Ser-429. Residues 464-576 (AVTIQGVLRR…WFKHLSAACQ (113 aa)) enclose the PH domain. A required for stimulation of nucleotide exchange by RALA region spans residues 466-590 (TIQGVLRRKT…QVPTNLMTFE (125 aa)).

In terms of assembly, interacts with RALA. Interacts with the SH3 domains of GRB2 and PLCG1. As to expression, abundant in brain and testis.

The protein localises to the cytoplasm. The protein resides in the cell membrane. In terms of biological role, guanine nucleotide exchange factor for the small GTPase RALA. May be involved in cytoskeletal organization. May also be involved in the stimulation of transcription in a Ras-independent fashion. This is Ras-specific guanine nucleotide-releasing factor RalGPS2 (Ralgps2) from Mus musculus (Mouse).